The chain runs to 45 residues: Large ribosomal subunit protein bL36 (45 aa).

The protein belongs to the bacterial ribosomal protein bL36 family.

The polypeptide is Large ribosomal subunit protein bL36 (Aliivibrio salmonicida (strain LFI1238) (Vibrio salmonicida (strain LFI1238))).